The following is a 299-amino-acid chain: Protease HtpX homolog (299 aa).

A run of 2 helical transmembrane segments spans residues 14–34 (WLLLLVFFLLLGLVGYGVGNL) and 39–59 (GFGGLILALVIGFIYVVTMIF). Histidine 143 is a Zn(2+) binding site. Glutamate 144 is a catalytic residue. Histidine 147 serves as a coordination point for Zn(2+). A run of 2 helical transmembrane segments spans residues 153 to 173 (IRISTIAVALASAITMLAGMA) and 198 to 218 (IVFLILSLIAIILAPLAATLV). Glutamate 227 is a Zn(2+) binding site.

Belongs to the peptidase M48B family. It depends on Zn(2+) as a cofactor.

Its subcellular location is the cell membrane. This is Protease HtpX homolog from Streptococcus thermophilus (strain ATCC BAA-250 / LMG 18311).